Reading from the N-terminus, the 223-residue chain is MNLQRLSVFGTDNIGVYIYTNNKYTIIPRGLDSETKENIAQVLGTELLEAEISRSFLLGIFISGNDNGILLPKSTIDDEFRFLKENLRDCRVEILNSKVTALGNTILANNKAALIYPEFNDIEEKIIKETLGVEDIKRGKIAQMITVGSVGVITNKGGLVHVDTSEKELKELEKLFGVKIDIGTVNFGSVFIKSGLVANDKGTLVGASTTGPEILRIQKALGE.

Belongs to the eIF-6 family. In terms of assembly, associates with the 50S ribosomal subunit, specifically with protein L14. Binds to 23S rRNA, possibly between where the 30S and 50S subunits associate to initiate translation. Post-translationally, modified in an unknown fashion (not phosphorylation) following release from 50S ribosomal subunits.

Its function is as follows. Binds to the 50S ribosomal subunit and prevents its association with the 30S ribosomal subunit to form the 70S initiation complex. Inhibits translation of both leadered and leaderless mRNAs, maybe by binding to the 50S ribosome subunit, preventing it from binding to the 30S subunit. This Saccharolobus solfataricus (strain ATCC 35092 / DSM 1617 / JCM 11322 / P2) (Sulfolobus solfataricus) protein is Translation initiation factor 6.